The primary structure comprises 211 residues: Urease accessory protein UreF (211 aa).

The protein belongs to the UreF family. UreD, UreF and UreG form a complex that acts as a GTP-hydrolysis-dependent molecular chaperone, activating the urease apoprotein by helping to assemble the nickel containing metallocenter of UreC. The UreE protein probably delivers the nickel.

It localises to the cytoplasm. Required for maturation of urease via the functional incorporation of the urease nickel metallocenter. The polypeptide is Urease accessory protein UreF (Mycobacterium sp. (strain JLS)).